The chain runs to 116 residues: Large ribosomal subunit protein bL19 (116 aa).

Belongs to the bacterial ribosomal protein bL19 family.

Functionally, this protein is located at the 30S-50S ribosomal subunit interface and may play a role in the structure and function of the aminoacyl-tRNA binding site. The chain is Large ribosomal subunit protein bL19 from Mycoplasma mobile (strain ATCC 43663 / 163K / NCTC 11711) (Mesomycoplasma mobile).